An 816-amino-acid chain; its full sequence is Glycerol-3-phosphate acyltransferase (816 aa).

The HXXXXD motif signature appears at 298 to 303; that stretch reads CHRSHM.

The protein belongs to the GPAT/DAPAT family.

It is found in the cell membrane. The catalysed reaction is sn-glycerol 3-phosphate + an acyl-CoA = a 1-acyl-sn-glycero-3-phosphate + CoA. Its pathway is phospholipid metabolism; CDP-diacylglycerol biosynthesis; CDP-diacylglycerol from sn-glycerol 3-phosphate: step 1/3. The polypeptide is Glycerol-3-phosphate acyltransferase (Hamiltonella defensa subsp. Acyrthosiphon pisum (strain 5AT)).